The primary structure comprises 186 residues: Small ribosomal subunit protein uS5 (186 aa).

In terms of domain architecture, S5 DRBM spans 20–83 (FVDKLVHINR…EAAKRDMIFV (64 aa)).

This sequence belongs to the universal ribosomal protein uS5 family. As to quaternary structure, part of the 30S ribosomal subunit. Contacts proteins S4 and S8.

Functionally, with S4 and S12 plays an important role in translational accuracy. Located at the back of the 30S subunit body where it stabilizes the conformation of the head with respect to the body. The protein is Small ribosomal subunit protein uS5 of Brucella abortus (strain S19).